The chain runs to 307 residues: tRNA dimethylallyltransferase (307 aa).

Residue 11–18 participates in ATP binding; the sequence is GPTGSGKT. 13-18 lines the substrate pocket; sequence TGSGKT. The tract at residues 36-39 is interaction with substrate tRNA; sequence DSVA.

This sequence belongs to the IPP transferase family. In terms of assembly, monomer. The cofactor is Mg(2+).

It catalyses the reaction adenosine(37) in tRNA + dimethylallyl diphosphate = N(6)-dimethylallyladenosine(37) in tRNA + diphosphate. Functionally, catalyzes the transfer of a dimethylallyl group onto the adenine at position 37 in tRNAs that read codons beginning with uridine, leading to the formation of N6-(dimethylallyl)adenosine (i(6)A). The polypeptide is tRNA dimethylallyltransferase (Koribacter versatilis (strain Ellin345)).